The sequence spans 283 residues: MYLRRAVSKTLALPRRAPPGPAPLGKDASLRRMSSRKFPGTSGSNMIYYLVVGVTVSAGGYYTYKALTSKQVRRTEHVAEPKEQTKAELQPLPGEKEEHVAEAEQVCSEPGDTAVTEAESVDAEEVPEAAVVLPEESQASAPSEVPAEAAVVEASLSSSEPELKITEASLVETTESVPESTQEVESAAPDQDDVCNEGADTSQEGADTSQEGADTSQEGADTTKEEADNSKEAEGTTTEDPRSISEESAELEESPPLGSEPPAQPESQEEETQVTEETASPQG.

Positions 1-36 are disordered; sequence MYLRRAVSKTLALPRRAPPGPAPLGKDASLRRMSSR. Topologically, residues 1–41 are cytoplasmic; the sequence is MYLRRAVSKTLALPRRAPPGPAPLGKDASLRRMSSRKFPGT. Residues 42–64 traverse the membrane as a helical; Anchor for type IV membrane protein segment; that stretch reads SGSNMIYYLVVGVTVSAGGYYTY. The Mitochondrial intermembrane portion of the chain corresponds to 65-283; sequence KALTSKQVRR…VTEETASPQG (219 aa). Disordered stretches follow at residues 78 to 101 and 118 to 283; these read VAEPKEQTKAELQPLPGEKEEHVA and AESV…SPQG. Over residues 128 to 160 the composition is skewed to low complexity; the sequence is EAAVVLPEESQASAPSEVPAEAAVVEASLSSSE. 2 stretches are compositionally biased toward polar residues: residues 171-184 and 199-220; these read VETTESVPESTQEV and ADTSQEGADTSQEGADTSQEGA. Over residues 221–245 the composition is skewed to basic and acidic residues; sequence DTTKEEADNSKEAEGTTTEDPRSIS.

As to quaternary structure, interacts with RHOT1/Miro-1, RHOT2/Miro-2, TRAK1/OIP106 and TRAK2/GRIF1. Expressed in the ovary, testis, brain, adrenal glands and the compartments of the visual nervous system. Expressed in corneal endothelium (CE) (at protein level). Expressed in steroidogenic tissues with the highest level of expression observed in the adrenal gland. Weakly expressed in placenta. Weakly expressed in astrocytes and neurons under normoxia. Strongly expressed in astrocytes and neurons under hypoxia. Expressed in each layer of the retina, with particularly higher staining in the inner segment of the photoreceptor (IS), the outer plexiform layer (OPL) and the ganglion cell layer (GCL).

It is found in the mitochondrion. Its subcellular location is the mitochondrion outer membrane. The protein localises to the mitochondrion inner membrane. Functionally, plays a role in the trafficking of mitochondria along microtubules. Regulates the kinesin-mediated axonal transport of mitochondria to nerve terminals along microtubules during hypoxia. Participates in the translocation of TRAK2/GRIF1 from the cytoplasm to the mitochondrion. Also plays a role in steroidogenesis through maintenance of mitochondrial abundance and morphology. Plays an inhibitory role during neocortex development by regulating mitochondrial morphology, distribution and motility in neocortical neurons. This Mus musculus (Mouse) protein is Protein MGARP (Mgarp).